Reading from the N-terminus, the 296-residue chain is Nucleotide-binding protein Pnec_1620 (296 aa).

8 to 15 (GISGSGKS) is a binding site for ATP. 57–60 (DARR) serves as a coordination point for GTP.

This sequence belongs to the RapZ-like family.

In terms of biological role, displays ATPase and GTPase activities. The sequence is that of Nucleotide-binding protein Pnec_1620 from Polynucleobacter necessarius subsp. necessarius (strain STIR1).